The chain runs to 125 residues: Holo-[acyl-carrier-protein] synthase (125 aa).

Positions 8 and 57 each coordinate Mg(2+).

The protein belongs to the P-Pant transferase superfamily. AcpS family. It depends on Mg(2+) as a cofactor.

It is found in the cytoplasm. It carries out the reaction apo-[ACP] + CoA = holo-[ACP] + adenosine 3',5'-bisphosphate + H(+). Functionally, transfers the 4'-phosphopantetheine moiety from coenzyme A to a Ser of acyl-carrier-protein. The sequence is that of Holo-[acyl-carrier-protein] synthase from Neisseria meningitidis serogroup A / serotype 4A (strain DSM 15465 / Z2491).